The following is a 126-amino-acid chain: Small ribosomal subunit protein uS11 (126 aa).

This sequence belongs to the universal ribosomal protein uS11 family. Part of the 30S ribosomal subunit. Interacts with proteins S7 and S18. Binds to IF-3.

Its function is as follows. Located on the platform of the 30S subunit, it bridges several disparate RNA helices of the 16S rRNA. Forms part of the Shine-Dalgarno cleft in the 70S ribosome. This Treponema pallidum (strain Nichols) protein is Small ribosomal subunit protein uS11.